The sequence spans 327 residues: MTATKQHKKVILVGDGAVGSAYAYALVNQGIGQELGIIDINKDRTQGDAEDLSHALAFTFPKKIYSAEYSDAHDADLVVLTAGLPQKPGETRLELVEKNLRINQQIVTEIVNSGFNGIFLVAANPVDVLTYSTWKFSGFPKERVIGSGTSLDSARFRQALAEKIGIDARSVHAYIMGEHGDSEFAVWSHANVAGVKLYDWLQDNRDIDEQGLVDLFVSVRDAAYSIINKKGATYYGIGVALARITKAIFDDENAVLPLSVYQAGQYEGVEDVFIGQPAIIGAHGIVRPVNIPLSDAELQKMQASAKQLKDIIDDAFANPEIAAGVKN.

NAD(+)-binding positions include V18, D39, R44, Y69, and 83–84; that span reads GL. Substrate is bound by residues Q86, R92, and 124-127; that span reads NPVD. NAD(+) is bound by residues 122–124 and S147; that span reads AAN. Substrate is bound at residue 152–155; sequence DSAR. The beta-D-fructose 1,6-bisphosphate site is built by R157 and H172. H179 functions as the Proton acceptor in the catalytic mechanism. A Phosphotyrosine modification is found at Y224. T233 contributes to the substrate binding site.

Belongs to the LDH/MDH superfamily. LDH family. Homotetramer.

Its subcellular location is the cytoplasm. It carries out the reaction (S)-lactate + NAD(+) = pyruvate + NADH + H(+). The protein operates within fermentation; pyruvate fermentation to lactate; (S)-lactate from pyruvate: step 1/1. Allosterically activated by fructose 1,6-bisphosphate (FBP). In terms of biological role, catalyzes the conversion of lactate to pyruvate. The polypeptide is L-lactate dehydrogenase (Streptococcus suis (strain 98HAH33)).